The chain runs to 557 residues: Phosphoacetylglucosamine mutase (557 aa).

Ser-67 serves as the catalytic Phosphoserine intermediate. Mg(2+) is bound by residues Ser-67, Asp-298, Asp-300, and Asp-302. Ser-67 carries the phosphoserine modification. Residues Glu-395 to Asn-397, Arg-522 to Thr-526, and Arg-531 each bind substrate.

Belongs to the phosphohexose mutase family. Mg(2+) serves as cofactor.

The protein resides in the cytoplasm. It localises to the nucleus. The catalysed reaction is N-acetyl-alpha-D-glucosamine 1-phosphate = N-acetyl-D-glucosamine 6-phosphate. Its pathway is nucleotide-sugar biosynthesis; UDP-N-acetyl-alpha-D-glucosamine biosynthesis; N-acetyl-alpha-D-glucosamine 1-phosphate from alpha-D-glucosamine 6-phosphate (route I): step 2/2. Catalyzes the conversion of GlcNAc-6-P into GlcNAc-1-P during the synthesis of uridine diphosphate/UDP-GlcNAc, which is a biosynthetic precursor of chitin and also supplies the amino sugars for N-linked oligosaccharides of glycoproteins. Also has phosphoglucomutase activity. In Saccharomyces cerevisiae (strain ATCC 204508 / S288c) (Baker's yeast), this protein is Phosphoacetylglucosamine mutase.